The following is a 375-amino-acid chain: Putative disease resistance protein At3g15700 (375 aa).

Positions 17–49 (KENDNVKKLKTATEELKDLRNIVMKRVKMYEDQ) form a coiled coil. Residues 158–372 (DNTGIIGLYG…LSTSPPNFSG (215 aa)) form the NB-ARC domain. ATP is bound at residue 167–174 (GVEGVGKT).

In terms of biological role, potential disease resistance protein. The protein is Putative disease resistance protein At3g15700 of Arabidopsis thaliana (Mouse-ear cress).